Reading from the N-terminus, the 48-residue chain is Large ribosomal subunit protein bL32 (48 aa).

Residues 1–20 are compositionally biased toward basic residues; sequence MAVPKRRVSKTRAAKRRTHY. The tract at residues 1-48 is disordered; that stretch reads MAVPKRRVSKTRAAKRRTHYKVSLPMPIKDKDGSYKMPHRANPTTKEY.

It belongs to the bacterial ribosomal protein bL32 family.

In Campylobacter jejuni subsp. jejuni serotype O:2 (strain ATCC 700819 / NCTC 11168), this protein is Large ribosomal subunit protein bL32 (rpmF).